Reading from the N-terminus, the 361-residue chain is Plasmid recombination enzyme (361 aa).

Tyr-44 and Tyr-114 together coordinate DNA. The interval Arg-331 to Leu-361 is disordered.

It belongs to the plasmid mobilization pre family.

Functionally, the interaction of the RSA site and the pre protein may not only serve a function in plasmid maintenance, but also contribute to the distribution of small antibiotic resistance plasmids among Gram-positive bacteria. The chain is Plasmid recombination enzyme (preA) from Lactiplantibacillus plantarum (Lactobacillus plantarum).